Reading from the N-terminus, the 151-residue chain is MGSDDQSAGDRIQKGFQINYMILRDADSGKIIWQENKDFSAPDQEHEARVPVKILEMRAVSREINFSTIESMENFRLDQKVLFKGRIMEEWFFEMGFVGANTTNTWQSTIEAAPESQMMPAKVLNGNVTIQTSFYDNETLITKSVVRLYYI.

The protein belongs to the PDE6D/unc-119 family. Interacts with Pde6.

It is found in the nucleus. The protein localises to the cytoplasm. The protein is Probable cGMP 3',5'-cyclic phosphodiesterase subunit delta of Drosophila erecta (Fruit fly).